The following is a 42-amino-acid chain: MQDLKTYLSVAPVLSTLWFGILAGLLIEINRLFPDALLFPFF.

A helical membrane pass occupies residues 7-27 (YLSVAPVLSTLWFGILAGLLI).

The protein belongs to the PsaJ family.

The protein localises to the plastid. It is found in the chloroplast thylakoid membrane. In terms of biological role, may help in the organization of the PsaE and PsaF subunits. This chain is Photosystem I reaction center subunit IX, found in Lemna minor (Common duckweed).